The sequence spans 182 residues: MKNNSVKIVVATGIGAALFVIIGWLINIPTPIPNTSIQLQYAVLALFSALFGPLAGFLIGFIGHALKDSFLYGAPWWTWVLGSGLIGLFLAFGVKRETLTQGIFGNKEIIRFNIVQFLANVVVWGIIAPIGDVLVYSEPANKVFTQGIVAGLVNALTIAVAGTLLLKLYAATRTKSGSLDKE.

5 helical membrane-spanning segments follow: residues 8–28, 42–62, 74–94, 114–134, and 146–166; these read IVVATGIGAALFVIIGWLINI, AVLALFSALFGPLAGFLIGFI, APWWTWVLGSGLIGLFLAFGV, IVQFLANVVVWGIIAPIGDVL, and QGIVAGLVNALTIAVAGTLLL.

Belongs to the UPF0397 family.

Its subcellular location is the cell membrane. The chain is UPF0397 protein YdcD (ydcD) from Lactococcus lactis subsp. lactis (strain IL1403) (Streptococcus lactis).